Consider the following 307-residue polypeptide: Glycine--tRNA ligase alpha subunit (307 aa).

It belongs to the class-II aminoacyl-tRNA synthetase family. In terms of assembly, tetramer of two alpha and two beta subunits.

Its subcellular location is the cytoplasm. It catalyses the reaction tRNA(Gly) + glycine + ATP = glycyl-tRNA(Gly) + AMP + diphosphate. This Xylella fastidiosa (strain 9a5c) protein is Glycine--tRNA ligase alpha subunit (glyQ).